A 242-amino-acid chain; its full sequence is Uridylate kinase (242 aa).

11-14 lines the ATP pocket; the sequence is KLSG. The involved in allosteric activation by GTP stretch occupies residues 19-24; the sequence is GNMGYG. G53 provides a ligand contact to UMP. The ATP site is built by G54 and R58. UMP is bound by residues D73 and 134–141; that span reads SGNPFFTT. T161, Y167, and D170 together coordinate ATP.

This sequence belongs to the UMP kinase family. As to quaternary structure, homohexamer.

The protein resides in the cytoplasm. The enzyme catalyses UMP + ATP = UDP + ADP. It participates in pyrimidine metabolism; CTP biosynthesis via de novo pathway; UDP from UMP (UMPK route): step 1/1. Allosterically activated by GTP. Inhibited by UTP. Its function is as follows. Catalyzes the reversible phosphorylation of UMP to UDP. This Nostoc sp. (strain PCC 7120 / SAG 25.82 / UTEX 2576) protein is Uridylate kinase.